Reading from the N-terminus, the 1302-residue chain is RNA-directed RNA polymerase (1302 aa).

Residues 562–823 enclose the RdRp catalytic domain; sequence VIVGDLEATG…QTHAKQGCYV (262 aa).

The protein belongs to the reoviridae RNA-directed RNA polymerase family.

The catalysed reaction is RNA(n) + a ribonucleoside 5'-triphosphate = RNA(n+1) + diphosphate. The protein is RNA-directed RNA polymerase (Segment-1) of Antilocapra americana (Pronghorn).